A 134-amino-acid polypeptide reads, in one-letter code: Waprin-Phi1 (134 aa).

The first 23 residues, methionine 1–alanine 23, serve as a signal peptide directing secretion. WAP domains follow at residues valine 36–isoleucine 82 and proline 83–arginine 133. 8 disulfides stabilise this stretch: cysteine 43–cysteine 72, cysteine 55–cysteine 76, cysteine 59–cysteine 71, cysteine 65–cysteine 80, cysteine 90–cysteine 120, cysteine 103–cysteine 124, cysteine 107–cysteine 119, and cysteine 113–cysteine 129.

It belongs to the venom waprin family. Expressed by the venom gland.

It localises to the secreted. Its function is as follows. Damages membranes of susceptible bacteria. Has no hemolytic activity. Not toxic to mice. Does not inhibit the proteinases elastase and cathepsin G. This chain is Waprin-Phi1, found in Philodryas olfersii (Green snake).